The sequence spans 155 residues: 3-hydroxyacyl-[acyl-carrier-protein] dehydratase FabZ (155 aa).

His-57 is an active-site residue.

This sequence belongs to the thioester dehydratase family. FabZ subfamily.

It localises to the cytoplasm. The catalysed reaction is a (3R)-hydroxyacyl-[ACP] = a (2E)-enoyl-[ACP] + H2O. Functionally, involved in unsaturated fatty acids biosynthesis. Catalyzes the dehydration of short chain beta-hydroxyacyl-ACPs and long chain saturated and unsaturated beta-hydroxyacyl-ACPs. The protein is 3-hydroxyacyl-[acyl-carrier-protein] dehydratase FabZ of Cereibacter sphaeroides (strain KD131 / KCTC 12085) (Rhodobacter sphaeroides).